The chain runs to 41 residues: Bacteriocin bavaricin-A (41 aa).

The protein belongs to the bacteriocin class IIA/YGNGV family.

It is found in the secreted. Its function is as follows. This heat stable bacteriocin shows activity against species of Lactobacillus, Listeria monocytogenes, Pediococcus, Enterococcus, Leuconostoc and Lactococcus. The protein is Bacteriocin bavaricin-A of Latilactobacillus sakei (Lactobacillus sakei).